The chain runs to 262 residues: Dihydroorotate dehydrogenase B (NAD(+)), electron transfer subunit (262 aa).

An FAD-binding FR-type domain is found at 3 to 104 (KLQEMMTIVS…MGPLGNGFPV (102 aa)). FAD-binding positions include 53 to 56 (RPIS), 70 to 72 (LYR), and 79 to 80 (GT). [2Fe-2S] cluster-binding residues include Cys-226, Cys-231, Cys-234, and Cys-249.

The protein belongs to the PyrK family. In terms of assembly, heterotetramer of 2 PyrK and 2 PyrD type B subunits. Requires [2Fe-2S] cluster as cofactor. FAD serves as cofactor.

The protein operates within pyrimidine metabolism; UMP biosynthesis via de novo pathway; orotate from (S)-dihydroorotate (NAD(+) route): step 1/1. In terms of biological role, responsible for channeling the electrons from the oxidation of dihydroorotate from the FMN redox center in the PyrD type B subunit to the ultimate electron acceptor NAD(+). This is Dihydroorotate dehydrogenase B (NAD(+)), electron transfer subunit from Lactococcus lactis subsp. lactis (strain IL1403) (Streptococcus lactis).